Consider the following 85-residue polypeptide: CDC42 small effector protein 2 (85 aa).

Residues cysteine 10 and cysteine 11 are each lipidated (S-palmitoyl cysteine). Residues 29-42 (IGEPTNFVHTAHVG) enclose the CRIB domain.

It belongs to the CDC42SE/SPEC family.

It is found in the cytoplasm. Its subcellular location is the cytoskeleton. The protein localises to the cell membrane. Its function is as follows. Probably involved in the organization of the actin cytoskeleton by acting downstream of CDC42, inducing actin filament assembly. The protein is CDC42 small effector protein 2 (cdc42se2) of Danio rerio (Zebrafish).